Reading from the N-terminus, the 385-residue chain is Proliferation-associated protein A (385 aa).

This sequence belongs to the peptidase M24 family.

The sequence is that of Proliferation-associated protein A (prlA) from Dictyostelium discoideum (Social amoeba).